A 257-amino-acid chain; its full sequence is uncharacterized protein (257 aa).

A signal peptide spans 1 to 22 (MIHSRKLRLWLYLVLLAVFIGA). Cys23 is lipidated: N-palmitoyl cysteine. Cys23 is lipidated: S-diacylglycerol cysteine.

This sequence belongs to the staphylococcal tandem lipoprotein family.

It is found in the cell membrane. This is an uncharacterized protein from Staphylococcus aureus (strain Mu50 / ATCC 700699).